Consider the following 84-residue polypeptide: Small ribosomal subunit protein uS17 (84 aa).

The protein belongs to the universal ribosomal protein uS17 family. In terms of assembly, part of the 30S ribosomal subunit.

Functionally, one of the primary rRNA binding proteins, it binds specifically to the 5'-end of 16S ribosomal RNA. The chain is Small ribosomal subunit protein uS17 from Borreliella afzelii (strain PKo) (Borrelia afzelii).